A 553-amino-acid polypeptide reads, in one-letter code: COP9 signalosome complex subunit 10 (553 aa).

Residues 21–46 show a composition bias toward acidic residues; the sequence is AEMEEDSDEMGVYEEETSQGAEEEVP. The tract at residues 21–47 is disordered; it reads AEMEEDSDEMGVYEEETSQGAEEEVPL. One can recognise a PCI domain in the interval 298-474; sequence LRTHFSACLQ…DYVYFGDEPR (177 aa).

Component of a COP9 signalosome-like (CSN) complex.

The protein resides in the cytoplasm. The protein localises to the nucleus. Its function is as follows. Component of the COP9 signalosome (CSN) complex that acts as an regulator of the ubiquitin (Ubl) conjugation pathway by mediating the deneddylation of the cullin subunit of SCF-type E3 ubiquitin-protein ligase complexes. The CSN complex is involved in the regulation of the mating pheromone response. This chain is COP9 signalosome complex subunit 10 (RRI2), found in Eremothecium gossypii (strain ATCC 10895 / CBS 109.51 / FGSC 9923 / NRRL Y-1056) (Yeast).